A 414-amino-acid polypeptide reads, in one-letter code: uncharacterized protein (414 aa).

It belongs to the UbiH/COQ6 family. The cofactor is FAD.

This is an uncharacterized protein from Synechocystis sp. (strain ATCC 27184 / PCC 6803 / Kazusa).